The chain runs to 285 residues: Acetyl-coenzyme A carboxylase carboxyl transferase subunit beta (285 aa).

One can recognise a CoA carboxyltransferase N-terminal domain in the interval 23–285; sequence VFRRCDGCSH…HLTAGRRARR (263 aa). Zn(2+)-binding residues include Cys27, Cys30, Cys46, and Cys49. The segment at 27 to 49 adopts a C4-type zinc-finger fold; that stretch reads CDGCSHTHDAAELARTFEVCSQC.

It belongs to the AccD/PCCB family. Acetyl-CoA carboxylase is a heterohexamer composed of biotin carboxyl carrier protein (AccB), biotin carboxylase (AccC) and two subunits each of ACCase subunit alpha (AccA) and ACCase subunit beta (AccD). It depends on Zn(2+) as a cofactor.

It is found in the cytoplasm. It carries out the reaction N(6)-carboxybiotinyl-L-lysyl-[protein] + acetyl-CoA = N(6)-biotinyl-L-lysyl-[protein] + malonyl-CoA. It participates in lipid metabolism; malonyl-CoA biosynthesis; malonyl-CoA from acetyl-CoA: step 1/1. Component of the acetyl coenzyme A carboxylase (ACC) complex. Biotin carboxylase (BC) catalyzes the carboxylation of biotin on its carrier protein (BCCP) and then the CO(2) group is transferred by the transcarboxylase to acetyl-CoA to form malonyl-CoA. This Sorangium cellulosum (strain So ce56) (Polyangium cellulosum (strain So ce56)) protein is Acetyl-coenzyme A carboxylase carboxyl transferase subunit beta.